The chain runs to 803 residues: MITLTELKCLADAQSSYHILKPWWDVFWYYITLIMLLVAVLAGALQLTQSRVLCCLPCKVEFDNQCAVPWDLLKGSENASSNSGLLLPLPLRIQNDLHRQQYSYIDAVCYEKQLHWFAKFFPYLVLLHTLIFAACSNFWLHYPSTSSRLEHFVSILHKCFDSPWTTRALSETVAEQSVRPLKLSKSKTLLSTSGGSADIDASKQSLPYPQPGLESPGIESPTSSVLDKKEGEQAKAIFEKVKRFRLHVEQRDIIYRVYLKQIIVKVILFVLIITYVPYFLSYITLEIDCSIDVQAFTGYKRYQCVYSLAEIFKVLASFYVILVMLYGLTSSYSLWWMLRSSLKQYSFEALREKSNYSDIPDVKNDFAFILHLADQYDPLYSKRFSIFLSEVSENKLKQINLNNEWTVERLKSKLVKNSQDKVELHLFMLNGLPDNVFELTEMEVLSLELIPEVKLPAAVAQLVNLRELHVYHSSLVVDHPALAFLEENLRILRLKFTEMGKIPRWVFHLKNLKELYLSGCVLPEQLSSLHLEGFQDLKNLRTLYLKSSLSRIPQVVTDLLPSLQKLSLDNEGSKLVVLNNLKKMVNLKSLELLSCDLERIPHSIFSLNNLHELDLKENNLKTVEEIISFQHLPSLSCLKLWHNNIAYIPAQIGALSNLEQLFLGHNNIESLPLQLFLCTKLHYLDLSYNHLTFIPEEIQYLTNLQYFAVTNNNIEMLPDGLFQCKKLQCLLLGRNSLTDLSPLVGELSNLTHLELTGNYLETLPVELEGCQSLKRSCLIVEDSLLNSLPLPVAERLQTCLDKC.

Topologically, residues 1–25 (MITLTELKCLADAQSSYHILKPWWD) are cytoplasmic. Residues 26–46 (VFWYYITLIMLLVAVLAGALQ) traverse the membrane as a helical segment. At 47–119 (LTQSRVLCCL…YEKQLHWFAK (73 aa)) the chain is on the extracellular side. Cystine bridges form between Cys-55/Cys-304 and Cys-109/Cys-289. N-linked (GlcNAc...) asparagine glycosylation is present at Asn-78. A helical transmembrane segment spans residues 120-140 (FFPYLVLLHTLIFAACSNFWL). Residues 141-261 (HYPSTSSRLE…DIIYRVYLKQ (121 aa)) lie on the Cytoplasmic side of the membrane. Phosphoserine is present on residues Ser-186 and Ser-196. Residues 262–282 (IIVKVILFVLIITYVPYFLSY) form a helical membrane-spanning segment. The Extracellular portion of the chain corresponds to 283–307 (ITLEIDCSIDVQAFTGYKRYQCVYS). Residues 308–328 (LAEIFKVLASFYVILVMLYGL) form a helical membrane-spanning segment. Residues 329 to 803 (TSSYSLWWML…ERLQTCLDKC (475 aa)) are Cytoplasmic-facing. LRR repeat units follow at residues 415 to 439 (VKNS…VFEL), 440 to 462 (TEME…VAQL), 464 to 486 (NLRE…AFLE), 488 to 509 (NLRI…VFHL), 511 to 532 (NLKE…LHLE), 539 to 559 (NLRT…VTDL), 562 to 582 (SLQK…NNLK), 586 to 607 (NLKS…IFSL), 609 to 630 (NLHE…ISFQ), 634 to 655 (SLSC…IGAL), 657 to 678 (NLEQ…LFLC), 680 to 701 (KLHY…IQYL), 703 to 724 (NLQY…LFQC), 726 to 747 (KLQC…VGEL), and 749 to 771 (NLTH…EGCQ).

This sequence belongs to the LRRC8 family. As to quaternary structure, heterohexamer; oligomerizes with other LRRC8 proteins (LRRC8A, LRRC8C, LRRC8D and/or LRRC8E) to form a heterohexamer. In vivo, the subunit composition may depend primarily on expression levels, and heterooligomeric channels containing various proportions of the different LRRC8 proteins may coexist.

It is found in the cell membrane. The protein localises to the endoplasmic reticulum membrane. It carries out the reaction chloride(in) = chloride(out). The catalysed reaction is iodide(out) = iodide(in). The enzyme catalyses taurine(out) = taurine(in). Functionally, non-essential component of the volume-regulated anion channel (VRAC, also named VSOAC channel), an anion channel required to maintain a constant cell volume in response to extracellular or intracellular osmotic changes. The VRAC channel conducts iodide better than chloride and can also conduct organic osmolytes like taurine. Channel activity requires LRRC8A plus at least one other family member (LRRC8B, LRRC8C, LRRC8D or LRRC8E); channel characteristics depend on the precise subunit composition. This Mus musculus (Mouse) protein is Volume-regulated anion channel subunit LRRC8B.